A 239-amino-acid polypeptide reads, in one-letter code: RNA polymerase sigma factor FliA (239 aa).

Positions 16-88 are sigma-70 factor domain-2; that stretch reads LWQRYVPLVR…MLDELRSRDW (73 aa). The Interaction with polymerase core subunit RpoC signature appears at 43 to 46; that stretch reads DLLQ. The sigma-70 factor domain-3 stretch occupies residues 96-166; sequence NAREVAQAIG…IELVTDDHQR (71 aa). The tract at residues 185 to 233 is sigma-70 factor domain-4; sequence AIETLPEREKLVLTLYYQEELNLKEIGAVLEVGESRVSQLHSQAIKRLR. The H-T-H motif DNA-binding region spans 207 to 226; sequence LKEIGAVLEVGESRVSQLHS.

Belongs to the sigma-70 factor family. FliA subfamily.

The protein resides in the cytoplasm. Its function is as follows. Sigma factors are initiation factors that promote the attachment of RNA polymerase to specific initiation sites and are then released. This sigma factor controls the expression of flagella-related genes. The sequence is that of RNA polymerase sigma factor FliA from Escherichia coli O157:H7.